The primary structure comprises 224 residues: Ribonuclease 3 (224 aa).

Residues 4-127 form the RNase III domain; the sequence is YSKLEKCLDY…IMGAIYLESG (124 aa). A Mg(2+)-binding site is contributed by Glu-40. The active site involves Asp-44. Residues Asp-113 and Glu-116 each coordinate Mg(2+). Residue Glu-116 is part of the active site. The DRBM domain occupies 154 to 223; sequence DYKTALQEIT…AKIAIDKLKE (70 aa).

It belongs to the ribonuclease III family. As to quaternary structure, homodimer. Mg(2+) is required as a cofactor.

It localises to the cytoplasm. It carries out the reaction Endonucleolytic cleavage to 5'-phosphomonoester.. Its function is as follows. Digests double-stranded RNA. Involved in the processing of primary rRNA transcript to yield the immediate precursors to the large and small rRNAs (23S and 16S). Processes some mRNAs, and tRNAs when they are encoded in the rRNA operon. Processes pre-crRNA and tracrRNA of type II CRISPR loci if present in the organism. The protein is Ribonuclease 3 of Aliarcobacter butzleri (strain RM4018) (Arcobacter butzleri).